A 368-amino-acid polypeptide reads, in one-letter code: tRNA(Met) cytidine acetate ligase (368 aa).

ATP is bound by residues 7-20 (IAEFNPFHNGHKYL), glycine 96, asparagine 152, and arginine 175.

The protein belongs to the TmcAL family.

It localises to the cytoplasm. The enzyme catalyses cytidine(34) in elongator tRNA(Met) + acetate + ATP = N(4)-acetylcytidine(34) in elongator tRNA(Met) + AMP + diphosphate. Catalyzes the formation of N(4)-acetylcytidine (ac(4)C) at the wobble position of elongator tRNA(Met), using acetate and ATP as substrates. First activates an acetate ion to form acetyladenylate (Ac-AMP) and then transfers the acetyl group to tRNA to form ac(4)C34. The protein is tRNA(Met) cytidine acetate ligase of Streptococcus pyogenes serotype M49 (strain NZ131).